A 159-amino-acid polypeptide reads, in one-letter code: Ribosomal RNA large subunit methyltransferase H (159 aa).

S-adenosyl-L-methionine contacts are provided by residues Leu-76, Gly-108, and 127-132 (FSKMTF).

It belongs to the RNA methyltransferase RlmH family. Homodimer.

It is found in the cytoplasm. It carries out the reaction pseudouridine(1915) in 23S rRNA + S-adenosyl-L-methionine = N(3)-methylpseudouridine(1915) in 23S rRNA + S-adenosyl-L-homocysteine + H(+). Its function is as follows. Specifically methylates the pseudouridine at position 1915 (m3Psi1915) in 23S rRNA. The polypeptide is Ribosomal RNA large subunit methyltransferase H (Staphylococcus aureus (strain MSSA476)).